We begin with the raw amino-acid sequence, 283 residues long: DNA repair protein RecO (283 aa).

Belongs to the RecO family.

Involved in DNA repair and RecF pathway recombination. The chain is DNA repair protein RecO from Gloeothece citriformis (strain PCC 7424) (Cyanothece sp. (strain PCC 7424)).